A 648-amino-acid polypeptide reads, in one-letter code: Acetyl-coenzyme A synthetase (648 aa).

Residues 191 to 194 (RGGR), threonine 310, and asparagine 334 contribute to the CoA site. ATP contacts are provided by residues 386 to 388 (GEP), 410 to 415 (DTWWQT), aspartate 499, and arginine 514. Residue serine 522 participates in CoA binding. Arginine 525 is an ATP binding site. Valine 536, histidine 538, and isoleucine 541 together coordinate Mg(2+). Arginine 583 serves as a coordination point for CoA. Lysine 608 bears the N6-acetyllysine mark.

The protein belongs to the ATP-dependent AMP-binding enzyme family. Requires Mg(2+) as cofactor. In terms of processing, acetylated. Deacetylation by the SIR2-homolog deacetylase activates the enzyme.

It carries out the reaction acetate + ATP + CoA = acetyl-CoA + AMP + diphosphate. In terms of biological role, catalyzes the conversion of acetate into acetyl-CoA (AcCoA), an essential intermediate at the junction of anabolic and catabolic pathways. AcsA undergoes a two-step reaction. In the first half reaction, AcsA combines acetate with ATP to form acetyl-adenylate (AcAMP) intermediate. In the second half reaction, it can then transfer the acetyl group from AcAMP to the sulfhydryl group of CoA, forming the product AcCoA. The polypeptide is Acetyl-coenzyme A synthetase (Aeromonas salmonicida (strain A449)).